Reading from the N-terminus, the 88-residue chain is Apolipoprotein C-I (88 aa).

Positions 1–26 are cleaved as a signal peptide; that stretch reads MRLFLSLPVLVVVLAMVLEGPAPTQA.

It belongs to the apolipoprotein C1 family.

It localises to the secreted. Functionally, inhibitor of lipoprotein binding to the low density lipoprotein (LDL) receptor, LDL receptor-related protein, and very low density lipoprotein (VLDL) receptor. Associates with high density lipoproteins (HDL) and the triacylglycerol-rich lipoproteins in the plasma and makes up about 10% of the protein of the VLDL and 2% of that of HDL. Appears to interfere directly with fatty acid uptake and is also the major plasma inhibitor of cholesteryl ester transfer protein (CETP). Binds free fatty acids and reduces their intracellular esterification. Modulates the interaction of APOE with beta-migrating VLDL and inhibits binding of beta-VLDL to the LDL receptor-related protein. This chain is Apolipoprotein C-I (APOC1), found in Phoca vitulina (Harbor seal).